A 101-amino-acid chain; its full sequence is Signal recognition particle 19 kDa protein (101 aa).

This sequence belongs to the SRP19 family. Part of the signal recognition particle protein translocation system, which is composed of SRP and FtsY. Archaeal SRP consists of a 7S RNA molecule of 300 nucleotides and two protein subunits: SRP54 and SRP19.

Its subcellular location is the cytoplasm. In terms of biological role, involved in targeting and insertion of nascent membrane proteins into the cytoplasmic membrane. Binds directly to 7S RNA and mediates binding of the 54 kDa subunit of the SRP. In Methanosarcina mazei (strain ATCC BAA-159 / DSM 3647 / Goe1 / Go1 / JCM 11833 / OCM 88) (Methanosarcina frisia), this protein is Signal recognition particle 19 kDa protein.